Reading from the N-terminus, the 508-residue chain is Maturase K (508 aa).

Belongs to the intron maturase 2 family. MatK subfamily.

Its subcellular location is the plastid. The protein resides in the chloroplast. Functionally, usually encoded in the trnK tRNA gene intron. Probably assists in splicing its own and other chloroplast group II introns. This chain is Maturase K, found in Pelargonium hortorum (Common geranium).